The chain runs to 214 residues: MKLLIMGPPGAGKGTQAEKIVKEFGITHISTGDMFRAALKNQTPLGLKAKEYMDKGELVPDEIVIAMVEERISAPDCAKGFLLDGFPRTIPQAEALDKKLAEMGITLDGVINIEVPREELIERLTGRRVCRQCGATYHVKFNPPKVEGVCDACGGELYQRSDDSLETVSNRLDVYEAQTAPLKDYYAKTGLLKNIDGTKSIEEVFASIKNALQK.

10–15 (GAGKGT) contributes to the ATP binding site. Residues 30 to 59 (STGDMFRAALKNQTPLGLKAKEYMDKGELV) are NMP. Residues Thr31, Arg36, 57 to 59 (ELV), 85 to 88 (GFPR), and Gln92 contribute to the AMP site. Residues 126–163 (GRRVCRQCGATYHVKFNPPKVEGVCDACGGELYQRSDD) form an LID region. Arg127 is a binding site for ATP. Zn(2+) contacts are provided by Cys130 and Cys133. 136–137 (TY) is an ATP binding site. Positions 150 and 153 each coordinate Zn(2+). AMP contacts are provided by Arg160 and Arg171. ATP is bound at residue Lys199.

It belongs to the adenylate kinase family. In terms of assembly, monomer.

The protein resides in the cytoplasm. The catalysed reaction is AMP + ATP = 2 ADP. The protein operates within purine metabolism; AMP biosynthesis via salvage pathway; AMP from ADP: step 1/1. In terms of biological role, catalyzes the reversible transfer of the terminal phosphate group between ATP and AMP. Plays an important role in cellular energy homeostasis and in adenine nucleotide metabolism. In Carboxydothermus hydrogenoformans (strain ATCC BAA-161 / DSM 6008 / Z-2901), this protein is Adenylate kinase.